A 1029-amino-acid polypeptide reads, in one-letter code: DNA repair protein RAD5A (1029 aa).

The segment at 83 to 104 (SVGANHRVEEENESVNGGGEES) is disordered. In terms of domain architecture, Helicase ATP-binding spans 406-622 (PSTLQMARGG…YSLLRFLRIE (217 aa)). 419-426 (DAMGLGKT) provides a ligand contact to ATP. The DEAH box signature appears at 573–576 (DEAH). The segment at 794–834 (CPICLEALEDAVLTPCAHRLCRECLLASWRNSTSGLCPVCR) adopts an RING-type zinc-finger fold. The 166-residue stretch at 864 to 1029 (KITALLEELE…RIEELKMLFT (166 aa)) folds into the Helicase C-terminal domain.

This sequence belongs to the SNF2/RAD54 helicase family. RAD16 subfamily.

The protein resides in the nucleus. In terms of biological role, functions in error-free postreplication DNA repair or DNA-damage tolerance (DTT) pathway. Required for homologous recombination (HR) induced by DNA double-strand break (DSB) in somatic cells. Required for damage-induced DNA repair, independently of MUS81 and RECQL4A. Plays a role in synthesis-dependent strand annealing (SDSA) but not in single-strand annealing (SSA). Possesses double-stranded DNA-dependent ATPase activity. Is able to regress replication forks with preference for forks with a leading strand gap. Is able to catalyze branch migration of Holliday junctions and is unaffected by protein blockades. This Arabidopsis thaliana (Mouse-ear cress) protein is DNA repair protein RAD5A.